The chain runs to 184 residues: Large ribosomal subunit protein uL6 (184 aa).

It belongs to the universal ribosomal protein uL6 family. In terms of assembly, part of the 50S ribosomal subunit.

This protein binds to the 23S rRNA, and is important in its secondary structure. It is located near the subunit interface in the base of the L7/L12 stalk, and near the tRNA binding site of the peptidyltransferase center. The polypeptide is Large ribosomal subunit protein uL6 (Onion yellows phytoplasma (strain OY-M)).